The chain runs to 572 residues: Dihydroxy-acid dehydratase (572 aa).

Residue C57 participates in [2Fe-2S] cluster binding. D89 serves as a coordination point for Mg(2+). Position 130 (C130) interacts with [2Fe-2S] cluster. Residues D131 and K132 each contribute to the Mg(2+) site. Position 132 is an N6-carboxylysine (K132). C202 provides a ligand contact to [2Fe-2S] cluster. E453 is a binding site for Mg(2+). S479 serves as the catalytic Proton acceptor.

Belongs to the IlvD/Edd family. Homodimer. [2Fe-2S] cluster is required as a cofactor. It depends on Mg(2+) as a cofactor.

It catalyses the reaction (2R)-2,3-dihydroxy-3-methylbutanoate = 3-methyl-2-oxobutanoate + H2O. It carries out the reaction (2R,3R)-2,3-dihydroxy-3-methylpentanoate = (S)-3-methyl-2-oxopentanoate + H2O. The protein operates within amino-acid biosynthesis; L-isoleucine biosynthesis; L-isoleucine from 2-oxobutanoate: step 3/4. Its pathway is amino-acid biosynthesis; L-valine biosynthesis; L-valine from pyruvate: step 3/4. Functionally, functions in the biosynthesis of branched-chain amino acids. Catalyzes the dehydration of (2R,3R)-2,3-dihydroxy-3-methylpentanoate (2,3-dihydroxy-3-methylvalerate) into 2-oxo-3-methylpentanoate (2-oxo-3-methylvalerate) and of (2R)-2,3-dihydroxy-3-methylbutanoate (2,3-dihydroxyisovalerate) into 2-oxo-3-methylbutanoate (2-oxoisovalerate), the penultimate precursor to L-isoleucine and L-valine, respectively. This is Dihydroxy-acid dehydratase from Streptococcus sanguinis (strain SK36).